The following is a 402-amino-acid chain: Phosphoglycerate kinase (402 aa).

Residues 24-26 (DFN), arginine 40, 63-66 (HFGR), arginine 122, and arginine 155 each bind substrate. ATP is bound by residues lysine 206, glycine 297, glutamate 328, and 357–360 (GGDS).

Belongs to the phosphoglycerate kinase family. Monomer.

Its subcellular location is the cytoplasm. It catalyses the reaction (2R)-3-phosphoglycerate + ATP = (2R)-3-phospho-glyceroyl phosphate + ADP. It functions in the pathway carbohydrate degradation; glycolysis; pyruvate from D-glyceraldehyde 3-phosphate: step 2/5. This chain is Phosphoglycerate kinase, found in Parasynechococcus marenigrum (strain WH8102).